We begin with the raw amino-acid sequence, 545 residues long: Glucose-6-phosphate isomerase (545 aa).

Glutamate 351 acts as the Proton donor in catalysis. Active-site residues include histidine 382 and lysine 510.

The protein belongs to the GPI family.

It is found in the cytoplasm. The enzyme catalyses alpha-D-glucose 6-phosphate = beta-D-fructose 6-phosphate. It participates in carbohydrate biosynthesis; gluconeogenesis. It functions in the pathway carbohydrate degradation; glycolysis; D-glyceraldehyde 3-phosphate and glycerone phosphate from D-glucose: step 2/4. Its function is as follows. Catalyzes the reversible isomerization of glucose-6-phosphate to fructose-6-phosphate. The sequence is that of Glucose-6-phosphate isomerase from Helicobacter pylori (strain HPAG1).